We begin with the raw amino-acid sequence, 74 residues long: Conotoxin MiEr93 (74 aa).

Residues 1-22 (MKLTCVLIIAVLFLTAYQLATA) form the signal peptide. Positions 23–45 (ASYAKGKQKHRALRPADKHLRLT) are excised as a propeptide. 3 disulfide bridges follow: Cys-48–Cys-62, Cys-55–Cys-66, and Cys-61–Cys-73.

This sequence belongs to the conotoxin O1 superfamily. Expressed by the venom duct.

The protein localises to the secreted. The protein is Conotoxin MiEr93 of Conus miles (Soldier cone).